Consider the following 230-residue polypeptide: Large ribosomal subunit protein uL1 (230 aa).

The protein belongs to the universal ribosomal protein uL1 family. As to quaternary structure, part of the 50S ribosomal subunit.

Its function is as follows. Binds directly to 23S rRNA. The L1 stalk is quite mobile in the ribosome, and is involved in E site tRNA release. Functionally, protein L1 is also a translational repressor protein, it controls the translation of the L11 operon by binding to its mRNA. This is Large ribosomal subunit protein uL1 from Onion yellows phytoplasma (strain OY-M).